The sequence spans 395 residues: Ribonuclease D (395 aa).

The 3'-5' exonuclease domain occupies Leu-14–Glu-181. One can recognise an HRDC domain in the interval Asn-219–Asp-300.

The protein belongs to the RNase D family. A divalent metal cation is required as a cofactor.

The protein resides in the cytoplasm. It catalyses the reaction Exonucleolytic cleavage that removes extra residues from the 3'-terminus of tRNA to produce 5'-mononucleotides.. Its function is as follows. Exonuclease involved in the 3' processing of various precursor tRNAs. Initiates hydrolysis at the 3'-terminus of an RNA molecule and releases 5'-mononucleotides. This Granulibacter bethesdensis (strain ATCC BAA-1260 / CGDNIH1) protein is Ribonuclease D.